Reading from the N-terminus, the 399-residue chain is Exodeoxyribonuclease 7 large subunit (399 aa).

This sequence belongs to the XseA family. In terms of assembly, heterooligomer composed of large and small subunits.

The protein resides in the cytoplasm. The enzyme catalyses Exonucleolytic cleavage in either 5'- to 3'- or 3'- to 5'-direction to yield nucleoside 5'-phosphates.. Its function is as follows. Bidirectionally degrades single-stranded DNA into large acid-insoluble oligonucleotides, which are then degraded further into small acid-soluble oligonucleotides. This is Exodeoxyribonuclease 7 large subunit from Clostridium botulinum (strain Eklund 17B / Type B).